A 667-amino-acid chain; its full sequence is Ribosomal oxygenase 1 (667 aa).

At Met1 the chain carries N-acetylmethionine. Over residues 1 to 11 the composition is skewed to low complexity; that stretch reads MDGLRASAGLL. Residues 1–99 form a disordered region; it reads MDGLRASAGL…ATGREPHGQL (99 aa). Composition is skewed to basic residues over residues 12–22 and 35–44; these read RRGRLRRRRQQ and RPRKIRRQLR. Phosphoserine is present on residues Ser61, Ser64, and Ser108. The 146-residue stretch at 322 to 467 folds into the JmjC domain; sequence CSLRLLCPQA…DFLEAVLPLA (146 aa). Fe cation contacts are provided by His368, Asp370, and His433.

Belongs to the ROX family. NO66 subfamily. In terms of assembly, interacts with SP7/OSX; the interaction is direct. Interacts with MYC. Interacts with PHF19; leading to its recruitment to H3K36me3 sites. Fe(2+) is required as a cofactor.

The protein localises to the nucleus. The protein resides in the nucleolus. Its subcellular location is the nucleoplasm. It catalyses the reaction N(6),N(6)-dimethyl-L-lysyl(36)-[histone H3] + 2 2-oxoglutarate + 2 O2 = L-lysyl(36)-[histone H3] + 2 formaldehyde + 2 succinate + 2 CO2. It carries out the reaction N(6)-methyl-L-lysyl-[protein] + 2-oxoglutarate + O2 = L-lysyl-[protein] + formaldehyde + succinate + CO2. The catalysed reaction is L-histidyl-[protein] + 2-oxoglutarate + O2 = (3S)-3-hydroxy-L-histidyl-[protein] + succinate + CO2. Functionally, oxygenase that can act as both a histone lysine demethylase and a ribosomal histidine hydroxylase. Specifically demethylates 'Lys-4' (H3K4me) and 'Lys-36' (H3K36me) of histone H3, thereby playing a central role in histone code. Preferentially demethylates trimethylated H3 'Lys-4' (H3K4me3) and monomethylated H3 'Lys-4' (H3K4me1) residues, while it has weaker activity for dimethylated H3 'Lys-36' (H3K36me2). Acts as a regulator of osteoblast differentiation via its interaction with SP7/OSX by demethylating H3K4me and H3K36me, thereby inhibiting SP7/OSX-mediated promoter activation. Also catalyzes demethylation of non-histone proteins, such as CGAS: demethylation of monomethylated CGAS promotes interaction between CGAS and PARP1, followed by PARP1 inactivation. Also catalyzes the hydroxylation of 60S ribosomal protein L8 on 'His-216', thereby playing a role in ribosome biogenesis. Participates in MYC-induced transcriptional activation. This is Ribosomal oxygenase 1 (RIOX1) from Bos taurus (Bovine).